We begin with the raw amino-acid sequence, 348 residues long: Probable dual-specificity RNA methyltransferase RlmN (348 aa).

The active-site Proton acceptor is Glu-93. In terms of domain architecture, Radical SAM core spans 99 to 333; it reads TEKRLTACLS…VSFRKSRGLD (235 aa). Cys-106 and Cys-338 are joined by a disulfide. Residues Cys-113, Cys-117, and Cys-120 each coordinate [4Fe-4S] cluster. Residues 160–161, Ser-190, 219–221, and Asn-295 contribute to the S-adenosyl-L-methionine site; these read GE and SLH. Cys-338 acts as the S-methylcysteine intermediate in catalysis.

This sequence belongs to the radical SAM superfamily. RlmN family. [4Fe-4S] cluster serves as cofactor.

Its subcellular location is the cytoplasm. It carries out the reaction adenosine(2503) in 23S rRNA + 2 reduced [2Fe-2S]-[ferredoxin] + 2 S-adenosyl-L-methionine = 2-methyladenosine(2503) in 23S rRNA + 5'-deoxyadenosine + L-methionine + 2 oxidized [2Fe-2S]-[ferredoxin] + S-adenosyl-L-homocysteine. The enzyme catalyses adenosine(37) in tRNA + 2 reduced [2Fe-2S]-[ferredoxin] + 2 S-adenosyl-L-methionine = 2-methyladenosine(37) in tRNA + 5'-deoxyadenosine + L-methionine + 2 oxidized [2Fe-2S]-[ferredoxin] + S-adenosyl-L-homocysteine. Its function is as follows. Specifically methylates position 2 of adenine 2503 in 23S rRNA and position 2 of adenine 37 in tRNAs. The protein is Probable dual-specificity RNA methyltransferase RlmN of Prochlorococcus marinus (strain MIT 9312).